A 202-amino-acid polypeptide reads, in one-letter code: Pyridoxal 5'-phosphate synthase subunit PdxT (202 aa).

50 to 52 provides a ligand contact to L-glutamine; the sequence is GES. Cys-82 functions as the Nucleophile in the catalytic mechanism. L-glutamine-binding positions include Arg-111 and 140 to 141; that span reads IR. Residues His-176 and Glu-178 each act as charge relay system in the active site.

This sequence belongs to the glutaminase PdxT/SNO family. In terms of assembly, in the presence of PdxS, forms a dodecamer of heterodimers. Only shows activity in the heterodimer.

It carries out the reaction aldehydo-D-ribose 5-phosphate + D-glyceraldehyde 3-phosphate + L-glutamine = pyridoxal 5'-phosphate + L-glutamate + phosphate + 3 H2O + H(+). The catalysed reaction is L-glutamine + H2O = L-glutamate + NH4(+). The protein operates within cofactor biosynthesis; pyridoxal 5'-phosphate biosynthesis. Functionally, catalyzes the hydrolysis of glutamine to glutamate and ammonia as part of the biosynthesis of pyridoxal 5'-phosphate. The resulting ammonia molecule is channeled to the active site of PdxS. In Streptomyces coelicolor (strain ATCC BAA-471 / A3(2) / M145), this protein is Pyridoxal 5'-phosphate synthase subunit PdxT.